Consider the following 117-residue polypeptide: Fluoride-specific ion channel FluC 2 (117 aa).

The next 2 membrane-spanning stretches (helical) occupy residues 1–21 (MISI…RSAI) and 46–66 (FLIG…AFFV). Residues glycine 71 and threonine 74 each coordinate Na(+). The chain crosses the membrane as a helical span at residues 95 to 115 (LFLNYSLLQFIIGFIACYIGY).

Belongs to the fluoride channel Fluc/FEX (TC 1.A.43) family.

The protein resides in the cell membrane. It catalyses the reaction fluoride(in) = fluoride(out). Na(+) is not transported, but it plays an essential structural role and its presence is essential for fluoride channel function. In terms of biological role, fluoride-specific ion channel. Important for reducing fluoride concentration in the cell, thus reducing its toxicity. This Staphylococcus aureus (strain NCTC 8325 / PS 47) protein is Fluoride-specific ion channel FluC 2.